Consider the following 581-residue polypeptide: NADH-quinone oxidoreductase subunit C/D (581 aa).

Positions 1-172 (MSGTDLVSEL…PLFNMTAALF (172 aa)) are NADH dehydrogenase I subunit C. The NADH dehydrogenase I subunit D stretch occupies residues 196 to 581 (ELMILNYGPH…IDYVMSDVDR (386 aa)).

It in the N-terminal section; belongs to the complex I 30 kDa subunit family. This sequence in the C-terminal section; belongs to the complex I 49 kDa subunit family. NDH-1 is composed of 13 different subunits. Subunits NuoB, CD, E, F, and G constitute the peripheral sector of the complex.

It localises to the cell inner membrane. It carries out the reaction a quinone + NADH + 5 H(+)(in) = a quinol + NAD(+) + 4 H(+)(out). In terms of biological role, NDH-1 shuttles electrons from NADH, via FMN and iron-sulfur (Fe-S) centers, to quinones in the respiratory chain. The immediate electron acceptor for the enzyme in this species is believed to be ubiquinone. Couples the redox reaction to proton translocation (for every two electrons transferred, four hydrogen ions are translocated across the cytoplasmic membrane), and thus conserves the redox energy in a proton gradient. This Rhodopseudomonas palustris (strain BisB5) protein is NADH-quinone oxidoreductase subunit C/D.